A 283-amino-acid chain; its full sequence is Probable endonuclease 4 (283 aa).

Zn(2+) contacts are provided by histidine 69, histidine 109, glutamate 145, aspartate 179, histidine 182, histidine 216, aspartate 229, histidine 231, and glutamate 261.

Belongs to the AP endonuclease 2 family. Zn(2+) serves as cofactor.

The enzyme catalyses Endonucleolytic cleavage to 5'-phosphooligonucleotide end-products.. Its function is as follows. Endonuclease IV plays a role in DNA repair. It cleaves phosphodiester bonds at apurinic or apyrimidinic (AP) sites, generating a 3'-hydroxyl group and a 5'-terminal sugar phosphate. In Prosthecochloris aestuarii (strain DSM 271 / SK 413), this protein is Probable endonuclease 4.